The sequence spans 534 residues: CTP synthase (534 aa).

The amidoligase domain stretch occupies residues 1-265; sequence MKYIIVTGGV…SNYLLKKLIL (265 aa). Residue Ser12 participates in CTP binding. Residue Ser12 coordinates UTP. 13–18 contacts ATP; the sequence is GLGKGI. Residue Tyr53 participates in L-glutamine binding. An ATP-binding site is contributed by Asp70. Residues Asp70 and Glu140 each coordinate Mg(2+). Residues 147 to 149, 186 to 191, and Lys222 contribute to the CTP site; these read DIE and KTKPTQ. UTP contacts are provided by residues 186 to 191 and Lys222; that span reads KTKPTQ. Residues 289 to 530 enclose the Glutamine amidotransferase type-1 domain; sequence NVAIVGKYTH…MGAMLKKSKE (242 aa). Gly352 lines the L-glutamine pocket. The Nucleophile; for glutamine hydrolysis role is filled by Cys379. Residues 380 to 383, Glu403, and Arg460 each bind L-glutamine; that span reads LGMQ. Residues His503 and Glu505 contribute to the active site.

Belongs to the CTP synthase family. In terms of assembly, homotetramer.

It catalyses the reaction UTP + L-glutamine + ATP + H2O = CTP + L-glutamate + ADP + phosphate + 2 H(+). The catalysed reaction is L-glutamine + H2O = L-glutamate + NH4(+). It carries out the reaction UTP + NH4(+) + ATP = CTP + ADP + phosphate + 2 H(+). The protein operates within pyrimidine metabolism; CTP biosynthesis via de novo pathway; CTP from UDP: step 2/2. Its activity is regulated as follows. Allosterically activated by GTP, when glutamine is the substrate; GTP has no effect on the reaction when ammonia is the substrate. The allosteric effector GTP functions by stabilizing the protein conformation that binds the tetrahedral intermediate(s) formed during glutamine hydrolysis. Inhibited by the product CTP, via allosteric rather than competitive inhibition. Catalyzes the ATP-dependent amination of UTP to CTP with either L-glutamine or ammonia as the source of nitrogen. Regulates intracellular CTP levels through interactions with the four ribonucleotide triphosphates. This is CTP synthase from Methanococcoides burtonii (strain DSM 6242 / NBRC 107633 / OCM 468 / ACE-M).